The primary structure comprises 412 residues: Aspartokinase (412 aa).

ACT domains follow at residues 266-340 and 346-412; these read LTIR…GDTN and IVGV…RQGE.

The protein belongs to the aspartokinase family.

The enzyme catalyses L-aspartate + ATP = 4-phospho-L-aspartate + ADP. It participates in amino-acid biosynthesis; L-lysine biosynthesis via DAP pathway; (S)-tetrahydrodipicolinate from L-aspartate: step 1/4. Its pathway is amino-acid biosynthesis; L-methionine biosynthesis via de novo pathway; L-homoserine from L-aspartate: step 1/3. It functions in the pathway amino-acid biosynthesis; L-threonine biosynthesis; L-threonine from L-aspartate: step 1/5. In Pseudomonas aeruginosa (strain ATCC 15692 / DSM 22644 / CIP 104116 / JCM 14847 / LMG 12228 / 1C / PRS 101 / PAO1), this protein is Aspartokinase (lysC).